Consider the following 504-residue polypeptide: 2,3-bisphosphoglycerate-independent phosphoglycerate mutase (504 aa).

Mn(2+) contacts are provided by Asp-13 and Ser-63. Catalysis depends on Ser-63, which acts as the Phosphoserine intermediate. Substrate contacts are provided by residues His-124, 153 to 154, Arg-183, Arg-189, 254 to 257, and Lys-330; these read RD and RADR. Asp-397, His-401, Asp-438, His-439, and His-457 together coordinate Mn(2+).

Belongs to the BPG-independent phosphoglycerate mutase family. In terms of assembly, monomer. Mn(2+) is required as a cofactor.

It catalyses the reaction (2R)-2-phosphoglycerate = (2R)-3-phosphoglycerate. The protein operates within carbohydrate degradation; glycolysis; pyruvate from D-glyceraldehyde 3-phosphate: step 3/5. Its function is as follows. Catalyzes the interconversion of 2-phosphoglycerate and 3-phosphoglycerate. This is 2,3-bisphosphoglycerate-independent phosphoglycerate mutase from Rhodopseudomonas palustris (strain ATCC BAA-98 / CGA009).